Reading from the N-terminus, the 136-residue chain is Cytochrome c oxidase subunit 13, mitochondrial (136 aa).

The N-terminal 29 residues, 1 to 29, are a transit peptide targeting the mitochondrion; it reads MFAQRQMFFARLAANLRAPAVRQTVQRRF. At 30 to 62 the chain is on the mitochondrial matrix side; the sequence is ASTPANESGKNAFVREREAVKQHAAETTELWRK. Residues 63–83 traverse the membrane as a helical segment; the sequence is ISLYGIPPALALAGYNAYTLY. Residues 84-136 lie on the Mitochondrial intermembrane side of the membrane; the sequence is NEHWEHWSHLPPLEERTEYPYQNIRTRNYPWGDGDKTLFWNESVNYHNRDKVT.

Belongs to the cytochrome c oxidase subunit 6A family. Component of the cytochrome c oxidase (complex IV, CIV), a multisubunit enzyme composed of 11 subunits. The complex is composed of a catalytic core of 3 subunits Cox1, Cox2 and Cox3, encoded in the mitochondrial DNA, and 8 supernumerary subunits Cox4, Cox5a/Cox5, Cox6, Cox7, Cox8, Cox7a/Cox9, Cox6b/Cox12 and Cox6a/Cox13, which are encoded in the nuclear genome. The complex exists as a monomer or a dimer and forms respiratory supercomplexes (SCs) in the inner mitochondrial membrane with NADH-ubiquinone oxidoreductase (complex I, CI) and ubiquinol-cytochrome c oxidoreductase (cytochrome b-c1 complex, complex III, CIII), resulting in various different assemblies (supercomplexes I(1)IV(1), I(1)III(3)IV(2), III(2)IV(1) and III(2)IV(2) as well as larger supercomplexes of compositions like I(1)III(2)IV(5-6)). Cox6a/Cox13 was not present in the cryo-EM structure. It may be involved in complex IV dimer formation and might not be always expressed. This would explain its absence in the map of the isolated monomer.

Its subcellular location is the mitochondrion inner membrane. It functions in the pathway energy metabolism; oxidative phosphorylation. In terms of biological role, component of the cytochrome c oxidase, the last enzyme in the mitochondrial electron transport chain which drives oxidative phosphorylation. The respiratory chain contains 3 multisubunit complexes succinate dehydrogenase (complex II, CII), ubiquinol-cytochrome c oxidoreductase (cytochrome b-c1 complex, complex III, CIII) and cytochrome c oxidase (complex IV, CIV), that cooperate to transfer electrons derived from NADH and succinate to molecular oxygen, creating an electrochemical gradient over the inner membrane that drives transmembrane transport and the ATP synthase. Cytochrome c oxidase is the component of the respiratory chain that catalyzes the reduction of oxygen to water. Electrons originating from reduced cytochrome c in the intermembrane space (IMS) are transferred via the dinuclear copper A center (CU(A)) of Cox2 and heme A of Cox1 to the active site in Cox1, a binuclear center (BNC) formed by heme A3 and copper B (CU(B)). The BNC reduces molecular oxygen to 2 water molecules using 4 electrons from cytochrome c in the IMS and 4 protons from the mitochondrial matrix. This chain is Cytochrome c oxidase subunit 13, mitochondrial (eat-5), found in Neurospora crassa (strain ATCC 24698 / 74-OR23-1A / CBS 708.71 / DSM 1257 / FGSC 987).